A 415-amino-acid polypeptide reads, in one-letter code: Plant UBX domain-containing protein 16 (415 aa).

Residues 19–69 enclose the UBA domain; the sequence is QLDEEIVLFRQDQLISSFLEIAVDQTAETARILLQTTDWNIDQAVNLFLTN. The region spanning 333 to 413 is the UBX domain; the sequence is DRSVVCSLCV…GLANSLISVT (81 aa).

This is Plant UBX domain-containing protein 16 from Arabidopsis thaliana (Mouse-ear cress).